We begin with the raw amino-acid sequence, 792 residues long: Endonuclease MutS2 (792 aa).

Residue 344–351 (GPNTGGKT) coordinates ATP. Residues 716–791 (IHLRGLHVEE…GLGVTVVYLE (76 aa)) form the Smr domain.

It belongs to the DNA mismatch repair MutS family. MutS2 subfamily. Homodimer. Binds to stalled ribosomes, contacting rRNA.

Endonuclease that is involved in the suppression of homologous recombination and thus may have a key role in the control of bacterial genetic diversity. In terms of biological role, acts as a ribosome collision sensor, splitting the ribosome into its 2 subunits. Detects stalled/collided 70S ribosomes which it binds and splits by an ATP-hydrolysis driven conformational change. Acts upstream of the ribosome quality control system (RQC), a ribosome-associated complex that mediates the extraction of incompletely synthesized nascent chains from stalled ribosomes and their subsequent degradation. Probably generates substrates for RQC. The sequence is that of Endonuclease MutS2 from Thermomicrobium roseum (strain ATCC 27502 / DSM 5159 / P-2).